Consider the following 199-residue polypeptide: COMM domain-containing protein 2 (199 aa).

Residues 123 to 190 (SYHNLEWRLD…QALEEMKTNH (68 aa)) enclose the COMM domain.

It belongs to the COMM domain-containing protein 2 family. In terms of assembly, component of the commander complex consisting of the CCC subcomplex and the retriever subcomplex. Component of the CCC (COMMD/CCDC22/CCDC93) subcomplex consisting of COMMD1, COMMD2, COMMD3, COMMD4, COMMD5, COMMD6, COMMD7, COMMD8, COMMD9, COMMD10, CCDC22 and CCDC93; within the complex forms a heterodimer with COMMD3. Interacts with RELA, RELB, NFKB1/p105, NFKB2/p100. Interacts with CCDC22, CCDC93, SCNN1B, CUL3, CUL4B, CUL5, CUL7.

The protein localises to the cytoplasm. Scaffold protein in the commander complex that is essential for endosomal recycling of transmembrane cargos; the commander complex is composed of the CCC subcomplex and the retriever subcomplex. May modulate activity of cullin-RING E3 ubiquitin ligase (CRL) complexes. May down-regulate activation of NF-kappa-B. The chain is COMM domain-containing protein 2 (COMMD2) from Pongo abelii (Sumatran orangutan).